The chain runs to 435 residues: Cyclin-J-like protein (435 aa).

Positions 14–191 (DVHCTLREKE…LLEAFSWNLC (178 aa)) constitute a Cyclin N-terminal domain. Residues 120 to 142 (SSNSPASAPHPPPTPPQVAETTG) form a disordered region.

It belongs to the cyclin family. Cyclin J subfamily.

The protein is Cyclin-J-like protein (CCNJL) of Homo sapiens (Human).